The sequence spans 2150 residues: Genome polyprotein (2150 aa).

The N-myristoyl glycine; by host moiety is linked to residue Gly-2. At 2–1463 (GAQVSRQNVG…ELNLANTIIT (1462 aa)) the chain is on the cytoplasmic side. The segment at 565–581 (IAQNPVENYIDEVLNEV) is amphipathic alpha-helix. Residues 592–611 (PTTSNSAPALDAAETGHTSS) are disordered. Residues His-868 and Asp-885 each act as for protease 2A activity in the active site. Zn(2+) is bound by residues Cys-902 and Cys-904. Catalysis depends on Cys-956, which acts as the For protease 2A activity. Residues Cys-962 and His-964 each contribute to the Zn(2+) site. The membrane-binding stretch occupies residues 1088–1157 (SDSWLKKFTE…SLRVADMKTQ (70 aa)). The segment at 1088-1221 (SDSWLKKFTE…PPGAGKSITT (134 aa)) is oligomerization. An RNA-binding region spans residues 1109–1113 (GNKIS). The region spanning 1181–1343 (EAKRIKTLYI…FKDPQGKLNV (163 aa)) is the SF3 helicase domain. Residues Cys-1350, Cys-1361, and Cys-1366 each contribute to the Zn(2+) site. A C4-type; degenerate zinc finger spans residues 1350–1366 (CDVDNRIGNARCCPFVC). Residues 1393–1400 (EDRRRRQV) form an RNA-binding region. An oligomerization region spans residues 1404–1409 (MTAIFQ). An intramembrane segment occupies 1464–1479 (IIANVIGMARIIYVIY). Over 1480–2150 (KLFCTLQGPY…LLLHEWYEKF (671 aa)) the chain is Cytoplasmic. Tyr-1489 is subject to O-(5'-phospho-RNA)-tyrosine. Residues 1508–1686 (GPEEEFGMSL…FSAMLLRSYF (179 aa)) enclose the Peptidase C3 domain. Active-site for protease 3C activity residues include His-1547, Glu-1578, and Cys-1654. Positions 1918 to 2031 (KCIMAFDYTN…SYIHELDMEA (114 aa)) constitute a RdRp catalytic domain. Asp-1924 and Asp-2017 together coordinate Mg(2+).

Belongs to the picornaviruses polyprotein family. Interacts with capsid protein VP1 and capsid protein VP3 to form heterotrimeric protomers. In terms of assembly, interacts with capsid protein VP0, and capsid protein VP3 to form heterotrimeric protomers. Five protomers subsequently associate to form pentamers which serve as building blocks for the capsid. Interacts with capsid protein VP2, capsid protein VP3 and capsid protein VP4 following cleavage of capsid protein VP0. As to quaternary structure, interacts with capsid protein VP1 and capsid protein VP3 in the mature capsid. Interacts with capsid protein VP0 and capsid protein VP1 to form heterotrimeric protomers. Five protomers subsequently associate to form pentamers which serve as building blocks for the capsid. Interacts with capsid protein VP4 in the mature capsid. Interacts with protein 2C; this interaction may be important for virion morphogenesis. In terms of assembly, interacts with capsid protein VP1 and capsid protein VP3. As to quaternary structure, homodimer. Homohexamer; forms a hexameric ring structure with 6-fold symmetry characteristic of AAA+ ATPases. Interacts (via N-terminus) with host RTN3 (via reticulon domain); this interaction is important for viral replication. Interacts with capsid protein VP3; this interaction may be important for virion morphogenesis. In terms of assembly, interacts with protein 3CD. As to quaternary structure, homodimer. Interacts with host GBF1. Interacts (via GOLD domain) with host ACBD3 (via GOLD domain); this interaction allows the formation of a viral protein 3A/ACBD3 heterotetramer with a 2:2 stoichiometry, which will stimulate the recruitment of host PI4KB in order to synthesize PI4P at the viral RNA replication sites. Interacts with RNA-directed RNA polymerase. In terms of assembly, interacts with protein 3AB and with RNA-directed RNA polymerase. As to quaternary structure, interacts with Viral protein genome-linked and with protein 3CD. Requires Mg(2+) as cofactor. In terms of processing, specific enzymatic cleavages in vivo by the viral proteases yield processing intermediates and the mature proteins. Myristoylation is required for the formation of pentamers during virus assembly. Further assembly of 12 pentamers and a molecule of genomic RNA generates the provirion. Post-translationally, during virion maturation, immature virions are rendered infectious following cleavage of VP0 into VP4 and VP2. This maturation seems to be an autocatalytic event triggered by the presence of RNA in the capsid and it is followed by a conformational change infectious virion. In terms of processing, myristoylation is required during RNA encapsidation and formation of the mature virus particle. VPg is uridylylated by the polymerase into VPg-pUpU. This acts as a nucleotide-peptide primer for the genomic RNA replication.

It is found in the virion. Its subcellular location is the host cytoplasm. It localises to the host cytoplasmic vesicle membrane. The protein resides in the host nucleus. It carries out the reaction a ribonucleoside 5'-triphosphate + H2O = a ribonucleoside 5'-diphosphate + phosphate + H(+). It catalyses the reaction Selective cleavage of Tyr-|-Gly bond in the picornavirus polyprotein.. The enzyme catalyses RNA(n) + a ribonucleoside 5'-triphosphate = RNA(n+1) + diphosphate. The catalysed reaction is Selective cleavage of Gln-|-Gly bond in the poliovirus polyprotein. In other picornavirus reactions Glu may be substituted for Gln, and Ser or Thr for Gly.. With respect to regulation, replication or transcription is subject to high level of random mutations by the nucleotide analog ribavirin. Functionally, forms an icosahedral capsid of pseudo T=3 symmetry with capsid proteins VP2 and VP3. The capsid is 300 Angstroms in diameter, composed of 60 copies of each capsid protein and enclosing the viral positive strand RNA genome. Capsid protein VP1 mainly forms the vertices of the capsid. Capsid protein VP1 interacts with host cell receptor to provide virion attachment to target host cells. This attachment induces virion internalization. Tyrosine kinases are probably involved in the entry process. After binding to its receptor, the capsid undergoes conformational changes. Capsid protein VP1 N-terminus (that contains an amphipathic alpha-helix) and capsid protein VP4 are externalized. Together, they shape a pore in the host membrane through which viral genome is translocated to host cell cytoplasm. In terms of biological role, forms an icosahedral capsid of pseudo T=3 symmetry with capsid proteins VP2 and VP3. The capsid is 300 Angstroms in diameter, composed of 60 copies of each capsid protein and enclosing the viral positive strand RNA genome. Its function is as follows. Lies on the inner surface of the capsid shell. After binding to the host receptor, the capsid undergoes conformational changes. Capsid protein VP4 is released, Capsid protein VP1 N-terminus is externalized, and together, they shape a pore in the host membrane through which the viral genome is translocated into the host cell cytoplasm. Component of immature procapsids, which is cleaved into capsid proteins VP4 and VP2 after maturation. Allows the capsid to remain inactive before the maturation step. Functionally, cysteine protease that cleaves viral polyprotein and specific host proteins. It is responsible for the autocatalytic cleavage between the P1 and P2 regions, which is the first cleavage occurring in the polyprotein. Also cleaves the host translation initiation factor EIF4G1, in order to shut down the capped cellular mRNA translation. Inhibits the host nucleus-cytoplasm protein and RNA trafficking by cleaving host members of the nuclear pores. Counteracts stress granule formation probably by antagonizing its assembly or promoting its dissassembly. In terms of biological role, plays an essential role in the virus replication cycle by acting as a viroporin. Creates a pore in the host endoplasmic reticulum and as a consequence releases Ca2+ in the cytoplasm of infected cell. In turn, high levels of cytoplasmic calcium may trigger membrane trafficking and transport of viral ER-associated proteins to viroplasms, sites of viral genome replication. Its function is as follows. Induces and associates with structural rearrangements of intracellular membranes. Displays RNA-binding, nucleotide binding and NTPase activities. May play a role in virion morphogenesis and viral RNA encapsidation by interacting with the capsid protein VP3. Localizes the viral replication complex to the surface of membranous vesicles. Together with protein 3CD binds the Cis-Active RNA Element (CRE) which is involved in RNA synthesis initiation. Acts as a cofactor to stimulate the activity of 3D polymerase, maybe through a nucleid acid chaperone activity. Functionally, localizes the viral replication complex to the surface of membranous vesicles. It inhibits host cell endoplasmic reticulum-to-Golgi apparatus transport and causes the disassembly of the Golgi complex, possibly through GBF1 interaction. This would result in depletion of MHC, trail receptors and IFN receptors at the host cell surface. Plays an essential role in viral RNA replication by recruiting ACBD3 and PI4KB at the viral replication sites, thereby allowing the formation of the rearranged membranous structures where viral replication takes place. In terms of biological role, acts as a primer for viral RNA replication and remains covalently bound to viral genomic RNA. VPg is uridylylated prior to priming replication into VPg-pUpU. The oriI viral genomic sequence may act as a template for this. The VPg-pUpU is then used as primer on the genomic RNA poly(A) by the RNA-dependent RNA polymerase to replicate the viral genome. During genome replication, the VPg-RNA linkage is removed by the host TDP2, thereby accelerating replication. During the late stage of the replication cycle, host TDP2 is excluded from sites of viral RNA synthesis and encapsidation, allowing for the generation of progeny virions. Its function is as follows. Involved in the viral replication complex and viral polypeptide maturation. It exhibits protease activity with a specificity and catalytic efficiency that is different from protease 3C. Protein 3CD lacks polymerase activity. Protein 3CD binds to the 5'UTR of the viral genome. Replicates the viral genomic RNA on the surface of intracellular membranes. May form linear arrays of subunits that propagate along a strong head-to-tail interaction called interface-I. Covalently attaches UMP to a tyrosine of VPg, which is used to prime RNA synthesis. The positive stranded RNA genome is first replicated at virus induced membranous vesicles, creating a dsRNA genomic replication form. This dsRNA is then used as template to synthesize positive stranded RNA genomes. ss(+)RNA genomes are either translated, replicated or encapsidated. Functionally, major viral protease that mediates proteolytic processing of the polyprotein. Cleaves host EIF5B, contributing to host translation shutoff. Also cleaves host PABPC1, contributing to host translation shutoff. Cleaves host NLRP1, triggers host N-glycine-mediated degradation of the autoinhibitory NLRP1 N-terminal fragment. The chain is Genome polyprotein from Homo sapiens (Human).